A 211-amino-acid chain; its full sequence is MRKLSFLDRVVEEIDSYARFTKHPLNPNRKSPSANTVDGQLSDNDKKHAAGLMRVDYTGEICAQGLYRGQASVAKSAQTKEHLYHAADEEYDHLAWCAERLEELGAKPSLLNPFWYWASFGIGATAGSISDSLSYGFVVETEKQVMKHLDSHLKNLPVNDNRSREILKQMYLDESEHAVEAQKAGGKKLPKPVKAIMKLQSKVMTTLAYRF.

The tract at residues lysine 22–aspartate 43 is disordered. Polar residues predominate over residues asparagine 28–serine 42. Residues glutamate 60, glutamate 90, histidine 93, glutamate 142, glutamate 174, and histidine 177 each coordinate Fe cation.

This sequence belongs to the COQ7 family. Fe cation is required as a cofactor.

The protein localises to the cell membrane. The enzyme catalyses a 5-methoxy-2-methyl-3-(all-trans-polyprenyl)benzene-1,4-diol + AH2 + O2 = a 3-demethylubiquinol + A + H2O. It functions in the pathway cofactor biosynthesis; ubiquinone biosynthesis. In terms of biological role, catalyzes the hydroxylation of 2-nonaprenyl-3-methyl-6-methoxy-1,4-benzoquinol during ubiquinone biosynthesis. This is 3-demethoxyubiquinol 3-hydroxylase from Francisella philomiragia subsp. philomiragia (strain ATCC 25017 / CCUG 19701 / FSC 153 / O#319-036).